The following is a 243-amino-acid chain: Ribosomal RNA small subunit methyltransferase E 2 (243 aa).

It belongs to the RNA methyltransferase RsmE family.

Its subcellular location is the cytoplasm. It carries out the reaction uridine(1498) in 16S rRNA + S-adenosyl-L-methionine = N(3)-methyluridine(1498) in 16S rRNA + S-adenosyl-L-homocysteine + H(+). In terms of biological role, specifically methylates the N3 position of the uracil ring of uridine 1498 (m3U1498) in 16S rRNA. Acts on the fully assembled 30S ribosomal subunit. This chain is Ribosomal RNA small subunit methyltransferase E 2 (rsmE2), found in Borreliella burgdorferi (strain ATCC 35210 / DSM 4680 / CIP 102532 / B31) (Borrelia burgdorferi).